The primary structure comprises 122 residues: Large ribosomal subunit protein uL14 (122 aa).

This sequence belongs to the universal ribosomal protein uL14 family. Part of the 50S ribosomal subunit. Forms a cluster with proteins L3 and L19. In the 70S ribosome, L14 and L19 interact and together make contacts with the 16S rRNA in bridges B5 and B8.

In terms of biological role, binds to 23S rRNA. Forms part of two intersubunit bridges in the 70S ribosome. This chain is Large ribosomal subunit protein uL14, found in Rhodopseudomonas palustris (strain HaA2).